The sequence spans 1013 residues: Trehalose monomycolate exporter MmpL3 (1013 aa).

At 1-14 (MFAWWGRTVYQFRY) the chain is on the cytoplasmic side. The helical transmembrane segment at 15–35 (IVIGVMVALCLGGGVYGISLG) threads the bilayer. The Periplasmic portion of the chain corresponds to 36 to 196 (NHVTQSGFYD…KRAEVAAIPL (161 aa)). 40-44 (QSGFY) contributes to the a 1,2-diacylglycero-3-phosphoethanolamine binding site. The next 2 membrane-spanning stretches (helical) occupy residues 197 to 217 (VAVV…PAII) and 218 to 238 (GGLA…FTPV). The Periplasmic portion of the chain corresponds to 239–240 (HF). A helical transmembrane segment spans residues 241–261 (FAQPVVTLIGLGIAIDYGLFI). The Cytoplasmic portion of the chain corresponds to 262–290 (VSRFREEIAEGYDTEAAVRRTVMTSGRTV). A helical membrane pass occupies residues 291-311 (VFSAVIIVASSVPLLLFPQGF). Residues 312-317 (LKSITY) are Periplasmic-facing. A helical transmembrane segment spans residues 318–338 (AIIASVMLAAILSITVLAAAL). Residues 339–401 (AILGPRVDAL…RLVNVVMKRP (63 aa)) lie on the Cytoplasmic side of the membrane. The helical transmembrane segment at 402-422 (IAFAAPILVVMVLLIIPLGQL) threads the bilayer. At 423-567 (SLGGISEKYL…HSLFDKLPLM (145 aa)) the chain is on the periplasmic side. The segment at 485 to 513 (SGFTDPDNDPEKMWKERPANDSGSKDPSV) is disordered. The segment covering 493–512 (DPEKMWKERPANDSGSKDPS) has biased composition (basic and acidic residues). The chain crosses the membrane as a helical span at residues 568-588 (ALILIVTTTVLMFLAFGSVVL). Topologically, residues 589–591 (PIK) are cytoplasmic. The chain crosses the membrane as a helical span at residues 592–612 (AALMSALTLGSTMGILTWMFV). The Periplasmic portion of the chain corresponds to 613-630 (DGHGSGLMNYTPQPLMAP). Residues 631–651 (MIGLIIAVIWGLSTDYEVFLV) form a helical membrane-spanning segment. Asp645 is a binding site for SQ109. Over 652-678 (SRMVEARERGMSTAEAIRIGTATTGRL) the chain is Cytoplasmic. Residues 679 to 699 (ITGAALILAVVAGAFVFSDLV) form a helical membrane-spanning segment. Residues 700–703 (MMKY) are Periplasmic-facing. A helical transmembrane segment spans residues 704–724 (LAFGLLIALLLDATIIRMFLV). At 725-1013 (PAVMKLLGDD…QDLLRREGRL (289 aa)) the chain is on the cytoplasmic side. The disordered stretch occupies residues 754–1013 (TELPDERKRP…QDLLRREGRL (260 aa)). The span at 757 to 772 (PDERKRPTVRESETDQ) shows a compositional bias: basic and acidic residues. Composition is skewed to pro residues over residues 792 to 803 (HPAPEPVRPMPP) and 820 to 829 (PPQPPQPPQA). Low complexity predominate over residues 842-867 (RFAMARNAVRNAVNSAVHGGAGSAAA). The segment covering 875-885 (PGGPAQPPAPP) has biased composition (pro residues). Residues 973–996 (REQEPSTEKLNTREDAPEDPETKR) show a composition bias toward basic and acidic residues.

This sequence belongs to the resistance-nodulation-cell division (RND) (TC 2.A.6) family. MmpL subfamily. Monomer. Interacts with TtfA (via N-terminus); active trehalose monomycolate (TMM) biosynthesis is not required for the complex formation. Interacts with MSMEG_5308.

Its subcellular location is the cell inner membrane. It is found in the cell septum. The protein resides in the cell tip. With respect to regulation, inhibited by the antimycobacterial compound BM212, a pyrrole derivative. Inhibited by the antitubercular drug SQ109. Inhibited by the adamantyl urea derivative AU1235, the indole carboxamide ICA38 and rimonabant, the antagonist for the cannabinoid receptor CB1. The dissociation constant (Kd) values for SQ109, AU1235, ICA38 and rimonabant are 1.65 uM, 0.29, 0.16 and 29.5, respectively. Inhibitory effects are due to binding of the inhibitors at the proton-transportation channel most likely dissipating the transmembrane electrochemical proton gradient needed for substrate translocation. In terms of biological role, transports trehalose monomycolate (TMM) to the cell wall. Flips TMM across the inner membrane. Membrane potential is not required for this function. Transports probably phosphatidylethanolamine (PE) as well. Binds specifically both TMM and PE, but not trehalose dimycolate (TDM). Also binds diacylglycerol (DAG) and other phospholipids, including phosphatidylglycerol (PG), phosphatidylinositol (PI), and cardiolipin (CDL). Contributes to membrane potential, cell wall composition, antibiotic susceptibility and fitness. The polypeptide is Trehalose monomycolate exporter MmpL3 (Mycolicibacterium smegmatis (strain ATCC 700084 / mc(2)155) (Mycobacterium smegmatis)).